The following is a 796-amino-acid chain: Putative aconitate hydratase, mitochondrial (796 aa).

The N-terminal 28 residues, 1–28 (MLRQIVSQRSAARRQLIDQLAPCLRRGL), are a transit peptide targeting the mitochondrion. Residues glutamine 108 and 201 to 203 (DSH) each bind substrate. Positions 399, 462, and 465 each coordinate [4Fe-4S] cluster. Arginine 489 and arginine 494 together coordinate substrate. A disordered region spans residues 540–569 (EPPTGQDLPSKGFEAGNPAFQPSAPVPDSS). 685-686 (AR) contacts substrate.

This sequence belongs to the aconitase/IPM isomerase family.

The protein localises to the mitochondrion. Functionally, has no detectable activity towards cis-acontiate or cis-homoaconitate. In Emericella nidulans (strain FGSC A4 / ATCC 38163 / CBS 112.46 / NRRL 194 / M139) (Aspergillus nidulans), this protein is Putative aconitate hydratase, mitochondrial (acoB).